The following is a 507-amino-acid chain: Protein zntA (507 aa).

Positions 1-18 are cleaved as a signal peptide; the sequence is MSIFAYSILAGLAPLLSS. N-linked (GlcNAc...) asparagine glycosylation occurs at Asn-31. The chain crosses the membrane as a helical span at residues 35-55; the sequence is FHILLCISAGLLFAVASLELI. Residues 124–179 are disordered; that stretch reads GLNLNNLNQATNLDNNEEDNDNLDNDGENEIENDHDHDHQEDEGGDNDHDHESEEK. A compositionally biased stretch (low complexity) spans 125–137; sequence LNLNNLNQATNLD. Residues 138 to 154 are compositionally biased toward acidic residues; sequence NNEEDNDNLDNDGENEI. The segment covering 155–179 has biased composition (basic and acidic residues); it reads ENDHDHDHQEDEGGDNDHDHESEEK. A helical membrane pass occupies residues 185–205; the sequence is IPMYGIGFGFAILIIVESIFS. The segment at 209–264 is disordered; it reads GGGGGGGHHSHSHGSLSSSSSNDVISDYISNNNSNNINNNDDDNNNNNNNNDDDDD. The segment covering 221–258 has biased composition (low complexity); that stretch reads HGSLSSSSSNDVISDYISNNNSNNINNNDDDNNNNNNN. 5 N-linked (GlcNAc...) asparagine glycosylation sites follow: Asn-240, Asn-298, Asn-328, Asn-342, and Asn-351. A disordered region spans residues 305 to 350; it reads PNIASPVMNKDNNNNDKDKNRNSNKSDIKNSGSINNGNNSGNNNNN. The span at 317–332 shows a compositional bias: basic and acidic residues; it reads NNNDKDKNRNSNKSDI. Low complexity predominate over residues 333–350; it reads KNSGSINNGNNSGNNNNN. 5 consecutive transmembrane segments (helical) span residues 355–375, 388–408, 422–442, 451–471, and 486–506; these read LTIT…VVIS, VALA…SLIL, FFYF…SSFL, GAFV…TAIL, and LFSI…FHGA.

It belongs to the ZIP transporter (TC 2.A.5) family.

It localises to the membrane. In terms of biological role, may transport divalent cations. May participate, with dstA, in the regulation of the differentiation of stalk cells during development. The sequence is that of Protein zntA (zntA) from Dictyostelium discoideum (Social amoeba).